A 515-amino-acid polypeptide reads, in one-letter code: Zinc metalloproteinase-disintegrin-like EoMP06 (515 aa).

Residues 1–94 constitute a propeptide that is removed on maturation; it reads VEDHCYYHGR…TLGLIVPPHG (94 aa). Glutamine 95 carries the post-translational modification Pyrrolidone carboxylic acid. The region spanning 100–296 is the Peptidase M12B domain; that stretch reads KFIELIIVVD…YNPKCIVDPP (197 aa). Glutamate 103 is a binding site for Ca(2+). N-linked (GlcNAc...) asparagine glycosylation occurs at asparagine 160. Aspartate 187 is a binding site for Ca(2+). N-linked (GlcNAc...) asparagine glycans are attached at residues asparagine 194 and asparagine 225. 3 cysteine pairs are disulfide-bonded: cysteine 211–cysteine 291, cysteine 251–cysteine 275, and cysteine 253–cysteine 258. Histidine 236 is a Zn(2+) binding site. Glutamate 237 is an active-site residue. 2 residues coordinate Zn(2+): histidine 240 and histidine 246. Residues cysteine 291, valine 306, asparagine 309, valine 311, glutamate 313, glutamate 316, and aspartate 319 each coordinate Ca(2+). In terms of domain architecture, Disintegrin spans 304-390; sequence PAVCGNGVWE…ECPRNEFQRN (87 aa). Intrachain disulfides connect cysteine 307–cysteine 336, cysteine 318–cysteine 331, cysteine 320–cysteine 326, cysteine 330–cysteine 353, cysteine 344–cysteine 350, cysteine 349–cysteine 375, cysteine 362–cysteine 382, cysteine 369–cysteine 401, cysteine 394–cysteine 406, cysteine 413–cysteine 466, cysteine 428–cysteine 477, cysteine 441–cysteine 454, cysteine 461–cysteine 503, and cysteine 497–cysteine 508. The D/ECD-tripeptide signature appears at 368–370; sequence DCD. Positions 370, 371, and 385 each coordinate Ca(2+).

It belongs to the venom metalloproteinase (M12B) family. P-III subfamily. P-IIIa sub-subfamily. As to quaternary structure, monomer. Zn(2+) is required as a cofactor. As to expression, expressed by the venom gland.

The protein resides in the secreted. In terms of biological role, snake venom zinc metalloproteinase that catalyzes the conversion of prothrombin (F2) to alpha-thrombin through formation of a thrombin intermediate, thereby functioning as a procoagulant protein. In Echis ocellatus (Ocellated saw-scaled viper), this protein is Zinc metalloproteinase-disintegrin-like EoMP06.